Here is a 350-residue protein sequence, read N- to C-terminus: ATPase GET3 (350 aa).

26-33 (KGGVGKTT) provides a ligand contact to ATP. The active site involves Asp57. Positions 241 and 268 each coordinate ATP. Cys281 and Cys284 together coordinate Zn(2+).

This sequence belongs to the arsA ATPase family. In terms of assembly, homodimer. Component of the Golgi to ER traffic (GET) complex, which is composed of GET1, GET2 and GET3. Within the complex, GET1 and GET2 form a heterotetramer which is stabilized by phosphatidylinositol binding and which binds to the GET3 homodimer. Interacts with the chloride channel protein GEF1.

It localises to the cytoplasm. The protein resides in the endoplasmic reticulum. It is found in the golgi apparatus. Functionally, ATPase required for the post-translational delivery of tail-anchored (TA) proteins to the endoplasmic reticulum. Recognizes and selectively binds the transmembrane domain of TA proteins in the cytosol. This complex then targets to the endoplasmic reticulum by membrane-bound receptors GET1 and GET2, where the tail-anchored protein is released for insertion. This process is regulated by ATP binding and hydrolysis. ATP binding drives the homodimer towards the closed dimer state, facilitating recognition of newly synthesized TA membrane proteins. ATP hydrolysis is required for insertion. Subsequently, the homodimer reverts towards the open dimer state, lowering its affinity for the GET1-GET2 receptor, and returning it to the cytosol to initiate a new round of targeting. Cooperates with the HDEL receptor ERD2 to mediate the ATP-dependent retrieval of resident ER proteins that contain a C-terminal H-D-E-L retention signal from the Golgi to the ER. Involved in low-level resistance to the oxyanions arsenite and arsenate, and in heat tolerance. The protein is ATPase GET3 of Candida glabrata (strain ATCC 2001 / BCRC 20586 / JCM 3761 / NBRC 0622 / NRRL Y-65 / CBS 138) (Yeast).